A 210-amino-acid polypeptide reads, in one-letter code: Thymidylate kinase (210 aa).

11-18 (GVDGAGKT) serves as a coordination point for ATP.

It belongs to the thymidylate kinase family.

The enzyme catalyses dTMP + ATP = dTDP + ADP. Its function is as follows. Phosphorylation of dTMP to form dTDP in both de novo and salvage pathways of dTTP synthesis. This chain is Thymidylate kinase (tmk), found in Mycoplasma pneumoniae (strain ATCC 29342 / M129 / Subtype 1) (Mycoplasmoides pneumoniae).